We begin with the raw amino-acid sequence, 2212 residues long: RNA-directed RNA polymerase L (2212 aa).

Residues 30 to 288 (KDALLSQVHP…SHEENDSLDC (259 aa)) form an endonuclease region. Mn(2+) contacts are provided by glutamate 55, aspartate 93, and glutamate 106. Lysine 119 is an active-site residue. Positions 922 to 942 (MKSSDAREERLQDPKRNEKNA) are disordered. Basic and acidic residues predominate over residues 923–942 (KSSDAREERLQDPKRNEKNA). Residues 1175 to 1371 (CDMKMAVNNG…YLSSKLNKFV (197 aa)) enclose the RdRp catalytic domain. Residue aspartate 1333 participates in Mg(2+) binding.

This sequence belongs to the Bunyavirales RNA polymerase family. Homomultimer; the oligomeric structure is essential for the polymerase activity. Interacts with nucleoprotein N. Interacts with protein Z; this interaction inhibits viral transcription and replication, Z partially blocks the product exit tunnel for the releasing nascent RNA product. Requires Mn(2+) as cofactor. Mg(2+) serves as cofactor.

Its subcellular location is the virion. It is found in the host cytoplasm. It catalyses the reaction RNA(n) + a ribonucleoside 5'-triphosphate = RNA(n+1) + diphosphate. Functionally, RNA-dependent RNA polymerase, which is responsible for the replication and transcription of the viral RNA genome using antigenomic RNA as an intermediate. During transcription, synthesizes subgenomic RNAs and assures their capping by a cap-snatching mechanism, which involves the endonuclease activity cleaving the host capped pre-mRNAs. These short capped RNAs are then used as primers for viral transcription. The 3'-end of subgenomic mRNAs molecules are heterogeneous and not polyadenylated. The replicase function is to direct synthesis of antigenomic and genomic RNA which are encapsidated and non capped. As a consequence of the use of the same enzyme for both transcription and replication, these mechanisms need to be well coordinated. These processes may be regulated by proteins N and Z in a dose-dependent manner. Z protein inhibits the viral polymerase L und thus the viral transcription and RNA synthesis. This Sabia mammarenavirus (isolate Human/Brasil/SPH114202/1990) (SABV) protein is RNA-directed RNA polymerase L.